A 134-amino-acid polypeptide reads, in one-letter code: RxLR effector protein Avh238 (134 aa).

The signal sequence occupies residues 1 to 21 (MRGVFFVAVAVAIFARSSAEA). The RxLR-dEER signature appears at 44-68 (RFLRVADSEDDDLAAPADDGKTEER). Residues 50–72 (DSEDDDLAAPADDGKTEERAPKF) are disordered. The segment covering 61-70 (DDGKTEERAP) has biased composition (basic and acidic residues).

This sequence belongs to the RxLR effector family.

It localises to the secreted. The protein localises to the host cytoplasm. It is found in the host nucleus. In terms of biological role, effector that, due to the lack of a histidine residue at position 79, is not able to induce cell death in tomato, tobacco, eggplant, potato, or in A.thaliana. This is RxLR effector protein Avh238 from Phytophthora sojae (Soybean stem and root rot agent).